Consider the following 281-residue polypeptide: General control transcription factor GCN4 (281 aa).

Phosphoserine is present on Ser-17. 2 required for transcriptional activation regions span residues 89–100 (LDDAVVESFFSS) and 106–125 (PMFEYENLEDNSKEWTSLFD). Thr-165 is subject to Phosphothreonine; by PHO85. The Nuclear localization signal signature appears at 167–200 (VLEDAKLTQTRKVKKPNSVVKKSHHVGKDDESRL). A disordered region spans residues 217–248 (LSPIVPESSDPAALKRARNTEAARRSRARKLQ). A Phosphoserine modification is found at Ser-218. The bZIP domain occupies 225 to 281 (SDPAALKRARNTEAARRSRARKLQRMKQLEDKVEELLSKNYHLENEVARLKKLVGER). The Nuclear localization signal motif lies at 231-249 (KRARNTEAARRSRARKLQR). The interval 231–251 (KRARNTEAARRSRARKLQRMK) is basic motif. The leucine-zipper stretch occupies residues 253 to 274 (LEDKVEELLSKNYHLENEVARL).

It belongs to the bZIP family. GCN4 subfamily. In terms of assembly, homodimer. Each subunit binds overlapping and non-identical half-sites that flank the central CG base-pair in the pseudo-palindromic motif 5'-ATGA[CG]TCAT-3'. Interacts with the mediator tail; the interaction with GAL11/MED15 is direct. Interacts with the SAGA histone acetyltransferase complex. Interacts with the SWI/SNF chromatin remodeling complex. Post-translationally, phosphorylated by the cyclin-CDK PCL5-PHO85. Phosphorylation of Thr-165 induces degradation of GCN4 by the E3 ubiquitin ligase complex SCF(Cdc4).

It localises to the nucleus. Functionally, master transcriptional regulator that mediates the response to amino acid starvation. Binds variations of the DNA sequence 5'-ATGA[CG]TCAT-3' in canonical nucleosome-depleted 5'-positioned promoters, and also within coding sequences and 3' non-coding regions. During nutrient starvation (low or poor amino acid, carbon or purine sources), it activates genes required for amino acid biosynthesis and transport, autophagy, cofactor biosynthesis and transport, mitochondrial transport, and additional downstream transcription factors. Activates transcription by recruiting multiple coactivators, including the mediator complex, the SAGA complex, and the SWI/SNF complex, to enable assembly of the pre-initiation complex at core promoters. The sequence is that of General control transcription factor GCN4 from Saccharomyces cerevisiae (strain ATCC 204508 / S288c) (Baker's yeast).